A 330-amino-acid polypeptide reads, in one-letter code: Major ferric iron-binding protein (330 aa).

The N-terminal stretch at M1–A22 is a signal peptide. Fe cation contacts are provided by H31, E79, Y217, and Y218.

Belongs to the bacterial solute-binding protein 1 family.

It is found in the periplasm. Its function is as follows. This protein may be a central component in the iron-acquisition system. This is Major ferric iron-binding protein (fbp) from Neisseria gonorrhoeae.